A 441-amino-acid chain; its full sequence is ACT domain-containing protein ACR8 (441 aa).

ACT domains are found at residues I34–V110, A115–K196, V248–G324, and R326–H405.

Expressed in roots, leaves, flowers and siliques.

Its function is as follows. May bind amino acids. The chain is ACT domain-containing protein ACR8 from Arabidopsis thaliana (Mouse-ear cress).